A 332-amino-acid polypeptide reads, in one-letter code: ATP-dependent (S)-NAD(P)H-hydrate dehydratase (332 aa).

The 281-residue stretch at 46–326 (LLERARNIVP…EQIHNVFDDI (281 aa)) folds into the YjeF C-terminal domain. (6S)-NADPHX contacts are provided by residues Gly146 and 199-205 (NAIEFCR). Residues 230 to 234 (KGLND) and 251 to 260 (GSGRRCGGQG) contribute to the ATP site. Residue Asp261 participates in (6S)-NADPHX binding.

The protein belongs to the NnrD/CARKD family. Mg(2+) is required as a cofactor.

The catalysed reaction is (6S)-NADHX + ATP = ADP + phosphate + NADH + H(+). The enzyme catalyses (6S)-NADPHX + ATP = ADP + phosphate + NADPH + H(+). Its function is as follows. Catalyzes the dehydration of the S-form of NAD(P)HX at the expense of ATP, which is converted to ADP. Together with NAD(P)HX epimerase, which catalyzes the epimerization of the S- and R-forms, the enzyme allows the repair of both epimers of NAD(P)HX, a damaged form of NAD(P)H that is a result of enzymatic or heat-dependent hydration. The protein is ATP-dependent (S)-NAD(P)H-hydrate dehydratase of Aedes aegypti (Yellowfever mosquito).